Here is an 86-residue protein sequence, read N- to C-terminus: MKTIFALVFCCAIAVVVLGFGENEGSTIDHDQNNCKGPGSRCSNKNECCKPKDMETYTYYCGSRWDSSSGDFVRKCVICNRESSMC.

Residues M1 to G19 form the signal peptide. 4 disulfides stabilise this stretch: C35/C49, C42/C61, C48/C76, and C79/C86.

Belongs to the neurotoxin 21 family. Expressed by the venom gland.

It localises to the secreted. Functionally, probable neurotoxin with ion channel impairing activity. The chain is Toxin ICK-18 from Trittame loki (Brush-footed trapdoor spider).